A 1041-amino-acid polypeptide reads, in one-letter code: Isoleucine--tRNA ligase (1041 aa).

The 'HIGH' region signature appears at 53 to 63 (PFANGLPHYGH). A 'KMSKS' region motif is present at residues 619 to 623 (KMSKS). Lysine 622 serves as a coordination point for ATP.

Belongs to the class-I aminoacyl-tRNA synthetase family. IleS type 2 subfamily. In terms of assembly, monomer. The cofactor is Zn(2+).

The protein resides in the cytoplasm. It catalyses the reaction tRNA(Ile) + L-isoleucine + ATP = L-isoleucyl-tRNA(Ile) + AMP + diphosphate. In terms of biological role, catalyzes the attachment of isoleucine to tRNA(Ile). As IleRS can inadvertently accommodate and process structurally similar amino acids such as valine, to avoid such errors it has two additional distinct tRNA(Ile)-dependent editing activities. One activity is designated as 'pretransfer' editing and involves the hydrolysis of activated Val-AMP. The other activity is designated 'posttransfer' editing and involves deacylation of mischarged Val-tRNA(Ile). This Mycobacterium bovis (strain ATCC BAA-935 / AF2122/97) protein is Isoleucine--tRNA ligase.